The chain runs to 109 residues: Large ribosomal subunit protein uL24 (109 aa).

The protein belongs to the universal ribosomal protein uL24 family. In terms of assembly, part of the 50S ribosomal subunit.

One of two assembly initiator proteins, it binds directly to the 5'-end of the 23S rRNA, where it nucleates assembly of the 50S subunit. Functionally, one of the proteins that surrounds the polypeptide exit tunnel on the outside of the subunit. The polypeptide is Large ribosomal subunit protein uL24 (Ehrlichia chaffeensis (strain ATCC CRL-10679 / Arkansas)).